A 701-amino-acid chain; its full sequence is Transcription factor PDR8 (701 aa).

Positions 1 to 22 are disordered; the sequence is MDGSHFPMKSTTGEPVSSGKKG. Residues 31–59 constitute a DNA-binding region (zn(2)-C6 fungal-type); it reads CAFCRKRKLKCSQARPMCQQCVIRKLPQC.

Its subcellular location is the cytoplasm. It is found in the nucleus. Functionally, up-regulates the transcription of the genes for ATP-binding cassette (ABC) transporters YOR1 and PDR15, for major facilitator superfamily transporter AZR1, for pleiotropic drug resistance SNG1, for alpha-glucosidase YJL216C and for YLL056C. This is Transcription factor PDR8 (PDR8) from Saccharomyces cerevisiae (strain ATCC 204508 / S288c) (Baker's yeast).